The chain runs to 126 residues: UPF0235 protein C15orf40 homolog (126 aa).

The segment at 1–32 (MPKKAGATSKGKNQTKEPETAPPAAGPVATDP) is disordered. Ser-89 carries the phosphoserine modification.

This sequence belongs to the UPF0235 family.

This chain is UPF0235 protein C15orf40 homolog, found in Mus musculus (Mouse).